Here is a 281-residue protein sequence, read N- to C-terminus: Leukocyte antigen CD37 (281 aa).

Residues 1 to 17 (MSAQESCLSLIKYFLFV) lie on the Cytoplasmic side of the membrane. The helical transmembrane segment at 18–38 (FNLFFFVLGGLIFCFGTWILI) threads the bilayer. Topologically, residues 39-59 (DKTSFVSFVGLSFVPLQTWSK) are extracellular. The helical transmembrane segment at 60 to 74 (VLAVSGVLTMALALL) threads the bilayer. Residues 75 to 85 (GCVGALKELRC) are Cytoplasmic-facing. Residues 86–111 (LLGLYFGMLLLLFATQITLGILISTQ) form a helical membrane-spanning segment. Over 112-241 (RVRLERRVQE…QSLQKWLHNN (130 aa)) the chain is Extracellular. Residues asparagine 170, asparagine 183, and asparagine 188 are each glycosylated (N-linked (GlcNAc...) asparagine). A helical transmembrane segment spans residues 242–266 (IISIVGICLGVGLLELGFMTLSIFL). At 267-281 (CRNLDHVYDRLARYR) the chain is on the cytoplasmic side.

This sequence belongs to the tetraspanin (TM4SF) family. As to quaternary structure, interacts with SCIMP. Interacts with SOCS3. Interacts with DECTIN1/CLEC7A. In terms of processing, tyrosine phosphorylated; leading to activation of downstream signaling pathways.

The protein resides in the cell membrane. In terms of biological role, structural component of specialized membrane microdomains known as tetraspanin-enriched microdomains (TERMs), which act as platforms for receptor clustering and signaling. Participates thereby in diverse biological functions such as cell signal transduction, adhesion, migration and protein trafficking. Upon ligand binding, two signaling pathways are activated, one acting through phosphorylation by LYN leading to cell death or a survival pathway with activation of GSK3B. Plays an essential role for clustering of integrin ITGA4/ITGB1 and promotes its mobility in the plasma membrane of B-cells. In turn, participates in ITGA4/ITGB1 integrin-mediated antiapoptotic signaling through AKT. Also plays a role in the migration of dendritic cells and neutrophils to draining lymph nodes, as well as in their integrin-mediated adhesion. Negatively regulates IL-6 responses through direct interaction with SOCS3 thereby preventing constitutive IL-6 signaling. Alternatively, inhibition of IL-6 signaling can also occur via interaction and stabilization of DECTIN1/CLEC7A at the cell membrane to inhibit its ability to promote the production of IL-6. The polypeptide is Leukocyte antigen CD37 (Cd37) (Mus musculus (Mouse)).